The sequence spans 294 residues: Ribosomal RNA small subunit methyltransferase I (294 aa).

It belongs to the methyltransferase superfamily. RsmI family.

Its subcellular location is the cytoplasm. It catalyses the reaction cytidine(1402) in 16S rRNA + S-adenosyl-L-methionine = 2'-O-methylcytidine(1402) in 16S rRNA + S-adenosyl-L-homocysteine + H(+). Catalyzes the 2'-O-methylation of the ribose of cytidine 1402 (C1402) in 16S rRNA. This is Ribosomal RNA small subunit methyltransferase I from Mesorhizobium japonicum (strain LMG 29417 / CECT 9101 / MAFF 303099) (Mesorhizobium loti (strain MAFF 303099)).